The following is a 265-amino-acid chain: Mlc titration factor A (265 aa).

Zn(2+) is bound by residues His-111, His-148, His-152, and Glu-211.

The protein belongs to the MtfA family. In terms of assembly, interacts with Mlc. Zn(2+) is required as a cofactor.

Its subcellular location is the cytoplasm. In terms of biological role, involved in the modulation of the activity of the glucose-phosphotransferase system (glucose-PTS). Interacts with the transcriptional repressor Mlc, preventing its interaction with DNA and leading to the modulation of expression of genes regulated by Mlc, including ptsG, which encodes the PTS system glucose-specific EIICB component. Functionally, shows zinc-dependent metallopeptidase activity. This Escherichia fergusonii protein is Mlc titration factor A.